Consider the following 369-residue polypeptide: Beta-1,4-galactosyltransferase 2 (369 aa).

Topologically, residues 1 to 15 (MSRLLGGTLERVCKA) are cytoplasmic. A helical; Signal-anchor for type II membrane protein membrane pass occupies residues 16–36 (VLLLCLLHFLVAVILYFDVYA). Topologically, residues 37–369 (QHLAFFSRFS…GRPMSWLNQG (333 aa)) are lumenal. Positions 59–75 (SSSTNCSRPNATASSSG) are enriched in polar residues. The segment at 59 to 90 (SSSTNCSRPNATASSSGLPEVPSARPGPTAPV) is disordered. Asparagine 63 and asparagine 68 each carry an N-linked (GlcNAc...) asparagine glycan. A disulfide bond links cysteine 94 and cysteine 136. Residues 147-151 (PFRHR), 186-188 (FNR), 214-215 (VD), and tryptophan 275 contribute to the UDP-alpha-D-galactose site. A disulfide bridge connects residues cysteine 208 and cysteine 227. Aspartate 215 serves as a coordination point for Mn(2+). 277–280 (GEDD) is an N-acetyl-D-glucosamine binding site. Position 308 (histidine 308) interacts with Mn(2+). UDP-alpha-D-galactose is bound at residue 308–310 (HDR). Arginine 320 lines the N-acetyl-D-glucosamine pocket. N-linked (GlcNAc...) asparagine glycosylation is present at asparagine 354.

Belongs to the glycosyltransferase 7 family. It depends on Mn(2+) as a cofactor.

The protein resides in the golgi apparatus. It is found in the golgi stack membrane. It carries out the reaction D-glucose + UDP-alpha-D-galactose = lactose + UDP + H(+). The catalysed reaction is an N-acetyl-beta-D-glucosaminyl derivative + UDP-alpha-D-galactose = a beta-D-galactosyl-(1-&gt;4)-N-acetyl-beta-D-glucosaminyl derivative + UDP + H(+). The enzyme catalyses N-acetyl-D-glucosamine + UDP-alpha-D-galactose = beta-D-galactosyl-(1-&gt;4)-N-acetyl-D-glucosamine + UDP + H(+). The protein operates within protein modification; protein glycosylation. In terms of biological role, responsible for the synthesis of complex-type N-linked oligosaccharides in many glycoproteins as well as the carbohydrate moieties of glycolipids. Can produce lactose. In Cricetulus griseus (Chinese hamster), this protein is Beta-1,4-galactosyltransferase 2 (B4GALT2).